Here is a 118-residue protein sequence, read N- to C-terminus: Large ribosomal subunit protein bL20 (118 aa).

Belongs to the bacterial ribosomal protein bL20 family.

Functionally, binds directly to 23S ribosomal RNA and is necessary for the in vitro assembly process of the 50S ribosomal subunit. It is not involved in the protein synthesizing functions of that subunit. This chain is Large ribosomal subunit protein bL20, found in Sodalis glossinidius (strain morsitans).